We begin with the raw amino-acid sequence, 56 residues long: Small ribosomal subunit protein uS14 (56 aa).

Positions 21, 24, 39, and 42 each coordinate Zn(2+).

The protein belongs to the universal ribosomal protein uS14 family. In terms of assembly, component of the small ribosomal subunit. Mature ribosomes consist of a small (40S) and a large (60S) subunit. The 40S subunit contains about 32 different proteins and 1 molecule of RNA (18S). The 60S subunit contains 45 different proteins and 3 molecules of RNA (25S, 5.8S and 5S). Requires Zn(2+) as cofactor.

Its subcellular location is the cytoplasm. Component of the ribosome, a large ribonucleoprotein complex responsible for the synthesis of proteins in the cell. The small ribosomal subunit (SSU) binds messenger RNAs (mRNAs) and translates the encoded message by selecting cognate aminoacyl-transfer RNA (tRNA) molecules. The large subunit (LSU) contains the ribosomal catalytic site termed the peptidyl transferase center (PTC), which catalyzes the formation of peptide bonds, thereby polymerizing the amino acids delivered by tRNAs into a polypeptide chain. The nascent polypeptides leave the ribosome through a tunnel in the LSU and interact with protein factors that function in enzymatic processing, targeting, and the membrane insertion of nascent chains at the exit of the ribosomal tunnel. In Candida albicans (strain SC5314 / ATCC MYA-2876) (Yeast), this protein is Small ribosomal subunit protein uS14.